The primary structure comprises 403 residues: Adenylate cyclase (403 aa).

A compositionally biased stretch (polar residues) spans M1–S16. The disordered stretch occupies residues M1 to D37. The interval A31–V60 is pyruvate binding. The region spanning A238–T347 is the Guanylate cyclase domain. Residues D243 and D287 each coordinate Mg(2+).

Belongs to the adenylyl cyclase class-3 family. In terms of assembly, homodimer. Mg(2+) serves as cofactor.

Its subcellular location is the cytoplasm. The enzyme catalyses ATP = 3',5'-cyclic AMP + diphosphate. Its activity is regulated as follows. Pyruvate-stimulated. Functionally, plays essential roles in regulation of cellular metabolism by catalyzing the synthesis of a second messenger, cAMP. This Glutamicibacter nicotianae (Arthrobacter nicotianae) protein is Adenylate cyclase (cya).